The sequence spans 228 residues: Non-specific lipid-transfer protein EPAD1 (228 aa).

An N-terminal signal peptide occupies residues Met1 to Ala24. Disulfide bonds link Cys40/Cys62, Cys63/Cys105, and Cys78/Cys119. Residue Asn94 is glycosylated (N-linked (GlcNAc...) asparagine). Positions Pro124–Leu207 are disordered. A compositionally biased stretch (pro residues) spans Arg145 to Gln162.

The protein belongs to the plant LTP family. Expressed in young panicles. Specifically expressed in pollen mother cells and young microspores.

Its subcellular location is the cell membrane. Plant non-specific lipid-transfer protein that binds phospholipids in vitro. Required for correct pollen exine patterning by controlling the continuity and homogeneity of the primexine distribution. The protein is Non-specific lipid-transfer protein EPAD1 of Oryza sativa subsp. japonica (Rice).